Consider the following 483-residue polypeptide: Glutamyl-tRNA(Gln) amidotransferase subunit A (483 aa).

Residues lysine 76 and serine 151 each act as charge relay system in the active site. Residue serine 175 is the Acyl-ester intermediate of the active site.

It belongs to the amidase family. GatA subfamily. As to quaternary structure, heterotrimer of A, B and C subunits.

The enzyme catalyses L-glutamyl-tRNA(Gln) + L-glutamine + ATP + H2O = L-glutaminyl-tRNA(Gln) + L-glutamate + ADP + phosphate + H(+). In terms of biological role, allows the formation of correctly charged Gln-tRNA(Gln) through the transamidation of misacylated Glu-tRNA(Gln) in organisms which lack glutaminyl-tRNA synthetase. The reaction takes place in the presence of glutamine and ATP through an activated gamma-phospho-Glu-tRNA(Gln). The polypeptide is Glutamyl-tRNA(Gln) amidotransferase subunit A (Pseudomonas fluorescens (strain SBW25)).